Here is a 453-residue protein sequence, read N- to C-terminus: CAAX prenyl protease 1 (453 aa).

The Lumenal segment spans residues 1–12; the sequence is MFDLKTILDHPN. A helical membrane pass occupies residues 13 to 33; the sequence is IPWKLIISGFSIAQFSFESYL. At 34–89 the chain is on the cytoplasmic side; the sequence is TYRQYQKLSETKLPPVLEDEIDDETFHKSRNYSRAKAKFSIFGDVYNLAQKLVFIK. The chain crosses the membrane as a helical span at residues 90–110; that stretch reads YDLFPKIWHMAVSLLNAVLPV. The Lumenal segment spans residues 111–121; that stretch reads RFHMVSTVAQS. A helical transmembrane segment spans residues 122 to 142; that stretch reads LCFLGLLSSLSTLVDLPLSYY. Residues 143–167 are Cytoplasmic-facing; that stretch reads SHFVLEEKFGFNKLTVQLWITDMIK. Residues 168 to 188 traverse the membrane as a helical segment; that stretch reads SLTLAYAIGGPILYLFLKIFD. Residues 189-197 are Lumenal-facing; sequence KFPTDFLWY. A helical transmembrane segment spans residues 198–218; it reads IMVFLFVVQILAMTIIPVFIM. The Cytoplasmic segment spans residues 219–306; sequence PMFNKFTPLE…HEIGHWQKNH (88 aa). His-297 is a Zn(2+) binding site. Glu-298 is a catalytic residue. His-301 provides a ligand contact to Zn(2+). The helical transmembrane segment at 307-327 threads the bilayer; it reads IVNMVIFSQLHTFLIFSLFTS. Topologically, residues 328–357 are lumenal; that stretch reads IYRNTSFYNTFGFFLEKSTGSFVDPVITKE. The helical transmembrane segment at 358 to 378 threads the bilayer; the sequence is FPIIIGFMLFNDLLTPLECAM. The Cytoplasmic segment spans residues 379–453; sequence QFVMSLISRT…LDYVSEKKKN (75 aa). Glu-390 provides a ligand contact to Zn(2+). The active-site Proton donor is Asp-394.

It belongs to the peptidase M48A family. It depends on Zn(2+) as a cofactor.

Its subcellular location is the endoplasmic reticulum membrane. The catalysed reaction is Hydrolyzes the peptide bond -P2-(S-farnesyl or geranylgeranyl)C-P1'-P2'-P3'-COOH where P1' and P2' are amino acids with aliphatic side chains and P3' is any C-terminal residue.. Its function is as follows. Proteolytically removes the C-terminal three residues of farnesylated A-factor mating pheromone. Also acts to cleave the N-terminal extension of the pheromone. Does not act on Ras. The polypeptide is CAAX prenyl protease 1 (STE24) (Saccharomyces cerevisiae (strain ATCC 204508 / S288c) (Baker's yeast)).